A 259-amino-acid chain; its full sequence is NADPH-dependent reductase BacG (259 aa).

NADP(+) is bound by residues 12-15 (SQGI), 34-36 (SRN), 62-63 (DM), I90, K113, and 185-191 (GFIATDR).

Belongs to the short-chain dehydrogenases/reductases (SDR) family. In terms of assembly, homodimer.

It localises to the cytoplasm. It participates in antibiotic biosynthesis; bacilysin biosynthesis. Along with the bacABCDEF operon, BacG is involved in the biosynthesis of the nonribosomally synthesized dipeptide antibiotic bacilysin, composed of L-alanine and L-anticapsin. Bacilysin is an irreversible inactivator of the glutaminase domain of glucosamine synthetase. BacG catalyzes the stereoselective reduction of exocyclic-delta(3),delta(5)-dihydro-hydroxyphenylpyruvate (ex-H2HPP), adding a pro-S hydride equivalent to C4 position to yield tetrahydro-hydroxyphenylpyruvate (H4HPP). Although the 3Z,7R-ex-H2HPP isomer is kinetically disfavored by BacB and produced in a smaller quantity than 3E,7R-ex-H2HPP, it is the preferred substrate for the conjugate reduction reaction of BacG. In Bacillus subtilis (strain 168), this protein is NADPH-dependent reductase BacG.